We begin with the raw amino-acid sequence, 152 residues long: MRGLKKQRRIQILIVAAVALTLSSVLIGYALRDGINFFRPPAEVAENPPPPSEVFRIGGMVEEGTLVRGQGETITFNVTDFAASIPVSYTGVLPDLFGEGEGMVGTGRLVNGTFEATEILARHDETYMPAEVTEALEAQGYSPDGYARDGDS.

Topologically, residues Met-1 to Arg-9 are cytoplasmic. Residues Ile-10–Ala-30 traverse the membrane as a helical; Signal-anchor for type II membrane protein segment. The Periplasmic portion of the chain corresponds to Leu-31–Ser-152. His-123 and Tyr-127 together coordinate heme.

The protein belongs to the CcmE/CycJ family.

It is found in the cell inner membrane. Its function is as follows. Heme chaperone required for the biogenesis of c-type cytochromes. Transiently binds heme delivered by CcmC and transfers the heme to apo-cytochromes in a process facilitated by CcmF and CcmH. The polypeptide is Cytochrome c-type biogenesis protein CcmE (Jannaschia sp. (strain CCS1)).